The primary structure comprises 103 residues: Small ribosomal subunit protein uS10 (103 aa).

It belongs to the universal ribosomal protein uS10 family. As to quaternary structure, part of the 30S ribosomal subunit.

Involved in the binding of tRNA to the ribosomes. The protein is Small ribosomal subunit protein uS10 of Methylibium petroleiphilum (strain ATCC BAA-1232 / LMG 22953 / PM1).